The chain runs to 132 residues: Small ribosomal subunit protein uS8 (132 aa).

Belongs to the universal ribosomal protein uS8 family. As to quaternary structure, part of the 30S ribosomal subunit. Contacts proteins S5 and S12.

One of the primary rRNA binding proteins, it binds directly to 16S rRNA central domain where it helps coordinate assembly of the platform of the 30S subunit. In Anaeromyxobacter dehalogenans (strain 2CP-C), this protein is Small ribosomal subunit protein uS8.